The primary structure comprises 103 residues: Large ribosomal subunit protein uL24 (103 aa).

The protein belongs to the universal ribosomal protein uL24 family. In terms of assembly, part of the 50S ribosomal subunit.

Its function is as follows. One of two assembly initiator proteins, it binds directly to the 5'-end of the 23S rRNA, where it nucleates assembly of the 50S subunit. One of the proteins that surrounds the polypeptide exit tunnel on the outside of the subunit. The polypeptide is Large ribosomal subunit protein uL24 (Histophilus somni (strain 129Pt) (Haemophilus somnus)).